We begin with the raw amino-acid sequence, 815 residues long: Leucine--tRNA ligase (815 aa).

Positions 42–52 (PYPSGRLHMGH) match the 'HIGH' region motif. The 'KMSKS' region motif lies at 574–578 (KMSKS). Lys577 serves as a coordination point for ATP.

Belongs to the class-I aminoacyl-tRNA synthetase family.

It is found in the cytoplasm. It carries out the reaction tRNA(Leu) + L-leucine + ATP = L-leucyl-tRNA(Leu) + AMP + diphosphate. The polypeptide is Leucine--tRNA ligase (Alcanivorax borkumensis (strain ATCC 700651 / DSM 11573 / NCIMB 13689 / SK2)).